The primary structure comprises 414 residues: Glutamyl-tRNA reductase (414 aa).

Substrate is bound by residues 47–50, S106, 111–113, and Q117; these read TCNR and EAQ. The active-site Nucleophile is C48. 185–190 provides a ligand contact to NADP(+); sequence GAGRTG.

It belongs to the glutamyl-tRNA reductase family. Homodimer.

The catalysed reaction is (S)-4-amino-5-oxopentanoate + tRNA(Glu) + NADP(+) = L-glutamyl-tRNA(Glu) + NADPH + H(+). It participates in porphyrin-containing compound metabolism; protoporphyrin-IX biosynthesis; 5-aminolevulinate from L-glutamyl-tRNA(Glu): step 1/2. Functionally, catalyzes the NADPH-dependent reduction of glutamyl-tRNA(Glu) to glutamate 1-semialdehyde (GSA). The polypeptide is Glutamyl-tRNA reductase (Herpetosiphon aurantiacus (strain ATCC 23779 / DSM 785 / 114-95)).